Here is an 89-residue protein sequence, read N- to C-terminus: Probable Fe(2+)-trafficking protein (89 aa).

This sequence belongs to the Fe(2+)-trafficking protein family.

Could be a mediator in iron transactions between iron acquisition and iron-requiring processes, such as synthesis and/or repair of Fe-S clusters in biosynthetic enzymes. The sequence is that of Probable Fe(2+)-trafficking protein from Stenotrophomonas maltophilia (strain K279a).